The primary structure comprises 218 residues: Glutathione S-transferase Mu 4 (218 aa).

Residues 1–88 (MPMTLGYWDI…YIARKHNLCG (88 aa)) form the GST N-terminal domain. Residues 7 to 8 (YW), 46 to 50 (WLSEK), 59 to 60 (NL), and 72 to 73 (QS) each bind glutathione. The GST C-terminal domain maps to 90 to 208 (TEEEKIRVDI…KTSRFLRTPL (119 aa)). Tyrosine 116 serves as a coordination point for substrate.

It belongs to the GST superfamily. Mu family. As to quaternary structure, homodimer.

The protein localises to the cytoplasm. It carries out the reaction RX + glutathione = an S-substituted glutathione + a halide anion + H(+). The enzyme catalyses 1-chloro-2,4-dinitrobenzene + glutathione = 2,4-dinitrophenyl-S-glutathione + chloride + H(+). It catalyses the reaction (13S,14S)-epoxy-(4Z,7Z,9E,11E,16Z,19Z)-docosahexaenoate + glutathione = (13R)-S-glutathionyl-(14S)-hydroxy-(4Z,7Z,9E,11E,16Z,19Z)-docosahexaenoate. The catalysed reaction is leukotriene C4 = leukotriene A4 + glutathione. Conjugation of reduced glutathione to a wide number of exogenous and endogenous hydrophobic electrophiles. Catalyzes the conjugation of leukotriene A4 with reduced glutathione (GSH) to form leukotriene C4. Can also catalyze the transfer of a glutathionyl group from glutathione (GSH) to 13(S),14(S)-epoxy-docosahexaenoic acid to form maresin conjugate in tissue regeneration 1 (MCTR1), a bioactive lipid mediator that possess potent anti-inflammatory and proresolving actions. The protein is Glutathione S-transferase Mu 4 (Gstm4) of Rattus norvegicus (Rat).